The following is a 1633-amino-acid chain: Serine-aspartate repeat-containing protein F (1633 aa).

Residues 1-45 (MKKRRQGPINKRVDFLSNKVNKYSIRKFTVGTASILVGATLMFGA) form the signal peptide. The ligand binding A region stretch occupies residues 46-678 (ADNEAKAAED…GSSTAQGDNP (633 aa)). A disordered region spans residues 51–269 (KAAEDNQLES…SISTDSSVND (219 aa)). The span at 61–74 (ASKEEQKGSRDNES) shows a compositional bias: basic and acidic residues. 2 stretches are compositionally biased toward polar residues: residues 85 to 99 (GSHS…NNAT) and 146 to 168 (PKTS…DNLN). Residues 175–184 (KESKTDEHST) show a composition bias toward basic and acidic residues. The segment covering 186–226 (QAQMSTNKSNLDTNDSPTQSEKTSSQANNDSTDNQSAPSKQ) has biased composition (polar residues). The span at 227-253 (LDSKPSEQKVYKTKFNDEPTQDVEHTT) shows a compositional bias: basic and acidic residues. Polar residues predominate over residues 255-266 (KLKTPSISTDSS). 4 consecutive CNA-B domains span residues 679 to 797 (TYSL…YLTP), 798 to 907 (KYNV…FYKP), 908 to 1018 (IYNL…YKTP), and 1019 to 1129 (KYSV…FDDD). The segment at 679-1129 (TYSLGDYVWL…SIDNGYFDDD (451 aa)) is type I collagen binding region. The segment at 862-889 (FETPEGYTPTKQNSGSDEGKDSNGTKTT) is disordered. The tract at residues 1085–1608 (KPEGMTQTTA…ANEDHDSKGT (524 aa)) is disordered. A compositionally biased stretch (basic and acidic residues) spans 1107-1119 (EDVRVTITDHDDF). Residues 1125–1584 (YFDDDSDSDS…DSDSDSDSDS (460 aa)) show a composition bias toward acidic residues. Residues 1585-1606 (DSDKNAKDKLPDTGANEDHDSK) are compositionally biased toward basic and acidic residues. Positions 1594 to 1598 (LPDTG) match the LPXTG sorting signal motif. Pentaglycyl murein peptidoglycan amidated threonine is present on threonine 1597. Positions 1598-1633 (GANEDHDSKGTLLGTLFAGLGALLLGRRRKKDNKEK) are cleaved as a propeptide — removed by sortase.

The protein belongs to the serine-aspartate repeat-containing protein (SDr) family.

It localises to the secreted. The protein localises to the cell wall. In terms of biological role, binds to type I collagen via alpha-2(I) or alpha-1(I) chains. This chain is Serine-aspartate repeat-containing protein F (sdrF), found in Staphylococcus epidermidis (strain ATCC 12228 / FDA PCI 1200).